The chain runs to 477 residues: Ribulose bisphosphate carboxylase large chain (477 aa).

A propeptide spanning residues 1-2 is cleaved from the precursor; that stretch reads MS. P3 bears the N-acetylproline mark. K14 is modified (N6,N6,N6-trimethyllysine). Substrate contacts are provided by N123 and T173. The active-site Proton acceptor is the K175. Residue K177 coordinates substrate. Mg(2+) is bound by residues K201, D203, and E204. K201 is subject to N6-carboxylysine. H294 (proton acceptor) is an active-site residue. Substrate is bound by residues R295, H327, and S379.

This sequence belongs to the RuBisCO large chain family. Type I subfamily. As to quaternary structure, heterohexadecamer of 8 large chains and 8 small chains; disulfide-linked. The disulfide link is formed within the large subunit homodimers. It depends on Mg(2+) as a cofactor. In terms of processing, the disulfide bond which can form in the large chain dimeric partners within the hexadecamer appears to be associated with oxidative stress and protein turnover.

The protein resides in the plastid. Its subcellular location is the chloroplast. The enzyme catalyses 2 (2R)-3-phosphoglycerate + 2 H(+) = D-ribulose 1,5-bisphosphate + CO2 + H2O. It carries out the reaction D-ribulose 1,5-bisphosphate + O2 = 2-phosphoglycolate + (2R)-3-phosphoglycerate + 2 H(+). Functionally, ruBisCO catalyzes two reactions: the carboxylation of D-ribulose 1,5-bisphosphate, the primary event in carbon dioxide fixation, as well as the oxidative fragmentation of the pentose substrate in the photorespiration process. Both reactions occur simultaneously and in competition at the same active site. This is Ribulose bisphosphate carboxylase large chain from Cichorium intybus (Chicory).